Here is a 74-residue protein sequence, read N- to C-terminus: Omega-filistatoxin-Kh1a (74 aa).

Post-translationally, contains 6 disulfide bonds. As to expression, expressed by the venom gland.

The protein resides in the secreted. Potently blocks vertebrate calcium channels Cav1 and Cav2. Is the most active on Cav2.2/CACNA1B (from HEK) (IC(50)=2.3 nM), followed by Cav2.1/CACNA1A (IC(50)=4.3 nM), Cav2.2/CACNA1B (from oocyte) (IC(50)=14.4 nM), Cav1.2/CACNA1C (IC(50)=26.8 nM), and Cav2.3/CACNA1E (IC(50)=96.4 nM). This Kukulcania hibernalis (Southern house spider) protein is Omega-filistatoxin-Kh1a.